We begin with the raw amino-acid sequence, 481 residues long: Polygalacturonase QRT3 (481 aa).

An N-terminal signal peptide occupies residues 1–27 (MELRKSQVAMPVFLAIMSLMVSQVVFA). PbH1 repeat units lie at residues 203-226 (SLRT…LVKS), 261-282 (GNDN…MVSG), and 356-377 (IRGV…QIVQ). N-linked (GlcNAc...) asparagine glycosylation is found at Asn415 and Asn455.

Belongs to the glycosyl hydrolase 28 family. As to expression, expressed in the tapetum cells in the anthers and in the ovules of open flowers.

Its subcellular location is the secreted. The protein resides in the cell wall. It carries out the reaction (1,4-alpha-D-galacturonosyl)n+m + H2O = (1,4-alpha-D-galacturonosyl)n + (1,4-alpha-D-galacturonosyl)m.. In terms of biological role, polygalacturonase required for degrading the pollen mother cell wall during microspore development. The sequence is that of Polygalacturonase QRT3 (QRT3) from Arabidopsis thaliana (Mouse-ear cress).